A 2452-amino-acid polypeptide reads, in one-letter code: Lovastatin diketide synthase lovF (2452 aa).

The Ketosynthase family 3 (KS3) domain occupies 10–381 (PAPIAVVGMG…GANAHAIVER (372 aa)). Catalysis depends on for beta-ketoacyl synthase activity residues Cys-173, His-308, and His-343. Positions 496 to 790 (VFTGQGAQWF…PYLSCLSRGK (295 aa)) are malonyl-CoA:ACP transacylase (MAT) domain. The active-site For malonyltransferase activity is Ser-555. An N-terminal hotdog fold region spans residues 861–998 (HDLIGLQEPL…GLVRVDMDQP (138 aa)). The segment at 861-1166 (HDLIGLQEPL…LEGLVFQSLG (306 aa)) is dehydratase (DH) domain. The PKS/mFAS DH domain occupies 861–1171 (HDLIGLQEPL…FQSLGASLGT (311 aa)). His-893 (proton acceptor; for dehydratase activity) is an active-site residue. The segment at 997–1017 (QPASSLSNPQRADPRPWSRKT) is disordered. Positions 1012 to 1171 (PWSRKTAPQD…FQSLGASLGT (160 aa)) are C-terminal hotdog fold. Residue Asp-1079 is the Proton donor; for dehydratase activity of the active site. The segment at 1343-1528 (ELVRLCCHKN…RDCDSDEFYM (186 aa)) is methyltransferase (CMet) domain. The interval 1745-2064 (GLLDSLYFRK…SGQHVGKIVV (320 aa)) is enoylreductase (ER) domain. The ketoreductase (KR) domain stretch occupies residues 2088 to 2260 (SYLVAGGLGG…AVTIDLGMVQ (173 aa)). In terms of domain architecture, Carrier spans 2373–2450 (ASIAVIMEAM…KVAEVVLQRY (78 aa)). Residue Ser-2410 is modified to O-(pantetheine 4'-phosphoryl)serine.

In terms of assembly, interacts with LovD. Pantetheine 4'-phosphate serves as cofactor.

The enzyme catalyses holo-[2-methylbutanoate polyketide synthase] + 2 malonyl-CoA + S-adenosyl-L-methionine + 2 NADPH + 3 H(+) = (S)-2-methylbutanoyl-[2-methylbutanoate polyketide synthase] + S-adenosyl-L-homocysteine + 2 CO2 + 2 NADP(+) + 2 CoA + H2O. It participates in polyketide biosynthesis; lovastatin biosynthesis. Functionally, lovastatin diketide synthase; part of the gene cluster that mediates the biosynthesis of lovastatin (also known as mevinolin, mevacor or monacolin K), a hypolipidemic inhibitor of (3S)-hydroxymethylglutaryl-coenzyme A (HMG-CoA) reductase (HMGR). The first step in the biosynthesis of lovastatin is the production of dihydromonacolin L acid by the lovastatin nonaketide synthase lovB and the trans-acting enoyl reductase lovC via condensation of one acetyl-CoA unit and 8 malonyl-CoA units. Dihydromonacolin L acid is released from lovB by the thioesterase lovG. Next, dihydromonacolin L acid is oxidized by the dihydromonacolin L monooxygenase lovA twice to form monacolin J acid. The 2-methylbutyrate moiety of lovastatin is synthesized by the lovastatin diketide synthase lovF via condensation of one acetyl-CoA unit and one malonyl-CoA unit. Finally, the covalent attachment of this moiety to monacolin J acid is catalyzed by the transesterase lovD to yield lovastatin. LovD has broad substrate specificity and can also convert monacolin J to simvastatin using alpha-dimethylbutanoyl-S-methyl-3-mercaptopropionate (DMB-S-MMP) as the thioester acyl donor, and can also catalyze the reverse reaction and function as hydrolase in vitro. LovD has much higher activity with LovF-bound 2-methylbutanoate than with free diketide substrates. The sequence is that of Lovastatin diketide synthase lovF from Aspergillus terreus (strain NIH 2624 / FGSC A1156).